A 210-amino-acid chain; its full sequence is MIKQPALAQEQYACVYAWLALLFFREVDDEGLIQLQSAEIADWLALLKRQPALAASVALLEQKIAALSLRQDAQLELAADFCGLFLMTDKKSALPYASQYPQQEPGMIKHLLLEAGMEVNDDFKEPADHLAIYLELLSHLHFSLGESFQQRRMNKLRQKTLSSLLEWLPEFTNNCLKHDPYGFYAALSQLLLAIVRFDDGKEDLSIVAVE.

It belongs to the TorD/DmsD family. TorD subfamily.

The protein resides in the cytoplasm. Functionally, involved in the biogenesis of TorA. Acts on TorA before the insertion of the molybdenum cofactor and, as a result, probably favors a conformation of the apoenzyme that is competent for acquiring the cofactor. The chain is Chaperone protein TorD from Salmonella dublin (strain CT_02021853).